A 168-amino-acid chain; its full sequence is ATP synthase subunit b (168 aa).

Residues 9–29 traverse the membrane as a helical segment; sequence SIPFGTIAYTLFIFLLLLVML.

The protein belongs to the ATPase B chain family. In terms of assembly, F-type ATPases have 2 components, F(1) - the catalytic core - and F(0) - the membrane proton channel. F(1) has five subunits: alpha(3), beta(3), gamma(1), delta(1), epsilon(1). F(0) has three main subunits: a(1), b(2) and c(10-14). The alpha and beta chains form an alternating ring which encloses part of the gamma chain. F(1) is attached to F(0) by a central stalk formed by the gamma and epsilon chains, while a peripheral stalk is formed by the delta and b chains.

The protein resides in the cell membrane. Functionally, f(1)F(0) ATP synthase produces ATP from ADP in the presence of a proton or sodium gradient. F-type ATPases consist of two structural domains, F(1) containing the extramembraneous catalytic core and F(0) containing the membrane proton channel, linked together by a central stalk and a peripheral stalk. During catalysis, ATP synthesis in the catalytic domain of F(1) is coupled via a rotary mechanism of the central stalk subunits to proton translocation. Its function is as follows. Component of the F(0) channel, it forms part of the peripheral stalk, linking F(1) to F(0). The chain is ATP synthase subunit b from Bacillus cereus (strain B4264).